We begin with the raw amino-acid sequence, 421 residues long: MQSNDENIYFPANQYVNAGQYSPLQQSFSQNSQYDLFDGFAEFGFLEQVPTTNMHSFSQSTQMEQNCLPNVNNSTRKRKAPGQNEQATVKRRQIGIEKWRLPSRSVVQPSADISDLRRPPISYVALCALACRNAPDMKITPAGVYAFILHHWRYYRYANENWKNSVRHQLSSKEHFDEETFQPDPSNQTVRRKFYIVKNPNMIRQNLISDADFDFFRKDSRGIEFYQKMFAGQIGLPRSLFYQIIGNEIPFLAGPENSSMFYQLLGMGKVVGYLETRYFREHYRSEHAATEPKYEEDYANFTEKIPSNAENLMSYGAATERNFQKFDFTDEEIELFHLNISSYHSVQKTCKECNLPNWCTPSVGDVETYVFGRQVPMPVNTPVILQQFETVAEQEGIRNNPLEEQKTTKDPRDISVLEALA.

A DNA-binding region (fork-head) is located at residues 118–218 (RPPISYVALC…SDADFDFFRK (101 aa)).

It is found in the nucleus. In terms of biological role, transcription factor. Binds to DNA sequence motif 5'-CTGTTTCA-3'. Regulates expression of a class of small RNAs, known as 21U-RNAs, perhaps acting redundantly with fkh-4 and fkh-5. The polypeptide is Forkhead box protein fkh-3 (Caenorhabditis elegans).